A 332-amino-acid polypeptide reads, in one-letter code: MISFSSFYQQIADSNLQHWLETLPSILGKWQRDHKHGNLPKWEKVLNKLHYPAPDQVDFVDSVTVGSGEQLSPGEKEKLENLLRLFMPWRKGPFHIHGIHIDTEWRSDWKWDRVKQHISPLKNRTVLDVGCGSGYHMWRMLGSGAKRVVGIDPSPLFLCQFEAVKRLAGPHHPVHLLPLGIEELPPLDAFDTVFSMGVLYHRRSPIDHLLQLRDQLRTGGELVLETLVIDGDENAVLVPQDRYGKMNNVWFIPSVAALMLWLKKCDFTDIRCVDTDVTALAEQRRTDWMPNESLVEYLDPNDITKTVEGYPAPKRATIIAIKNQPNQETVNG.

Carboxy-S-adenosyl-L-methionine is bound by residues K91, W105, K110, G130, 152–154 (DPS), 181–182 (IE), M196, Y200, and R315.

This sequence belongs to the class I-like SAM-binding methyltransferase superfamily. CmoB family. As to quaternary structure, homotetramer.

The catalysed reaction is carboxy-S-adenosyl-L-methionine + 5-hydroxyuridine(34) in tRNA = 5-carboxymethoxyuridine(34) in tRNA + S-adenosyl-L-homocysteine + H(+). Its function is as follows. Catalyzes carboxymethyl transfer from carboxy-S-adenosyl-L-methionine (Cx-SAM) to 5-hydroxyuridine (ho5U) to form 5-carboxymethoxyuridine (cmo5U) at position 34 in tRNAs. In Shewanella putrefaciens (strain CN-32 / ATCC BAA-453), this protein is tRNA U34 carboxymethyltransferase.